The primary structure comprises 95 residues: Aspartyl/glutamyl-tRNA(Asn/Gln) amidotransferase subunit C (95 aa).

This sequence belongs to the GatC family. As to quaternary structure, heterotrimer of A, B and C subunits.

The enzyme catalyses L-glutamyl-tRNA(Gln) + L-glutamine + ATP + H2O = L-glutaminyl-tRNA(Gln) + L-glutamate + ADP + phosphate + H(+). It catalyses the reaction L-aspartyl-tRNA(Asn) + L-glutamine + ATP + H2O = L-asparaginyl-tRNA(Asn) + L-glutamate + ADP + phosphate + 2 H(+). Its function is as follows. Allows the formation of correctly charged Asn-tRNA(Asn) or Gln-tRNA(Gln) through the transamidation of misacylated Asp-tRNA(Asn) or Glu-tRNA(Gln) in organisms which lack either or both of asparaginyl-tRNA or glutaminyl-tRNA synthetases. The reaction takes place in the presence of glutamine and ATP through an activated phospho-Asp-tRNA(Asn) or phospho-Glu-tRNA(Gln). This is Aspartyl/glutamyl-tRNA(Asn/Gln) amidotransferase subunit C from Campylobacter concisus (strain 13826).